The sequence spans 372 residues: Ligninase H2 (372 aa).

A signal peptide spans 1–21; the sequence is MAFKQLLAALSVALTLQVTQA. The propeptide occupies 22–28; it reads APNLDKR. 4 disulfides stabilise this stretch: Cys31–Cys44, Cys43–Cys314, Cys63–Cys149, and Cys278–Cys344. His76 functions as the Proton acceptor in the catalytic mechanism. Residues Asp77, Gly95, Asp97, and Ser99 each contribute to the Ca(2+) site. His205 is a heme b binding site. Ca(2+) contacts are provided by Ser206, Asp223, Thr225, Gln228, and Asp230. Asn286 is a glycosylation site (N-linked (GlcNAc...) asparagine).

It belongs to the peroxidase family. Ligninase subfamily. Requires heme b as cofactor. Ca(2+) serves as cofactor.

It carries out the reaction 1-(3,4-dimethoxyphenyl)-2-(2-methoxyphenoxy)propane-1,3-diol + H2O2 = 3,4-dimethoxybenzaldehyde + guaiacol + glycolaldehyde + H2O. It catalyses the reaction 2 (3,4-dimethoxyphenyl)methanol + H2O2 = 2 (3,4-dimethoxyphenyl)methanol radical + 2 H2O. Its pathway is secondary metabolite metabolism; lignin degradation. In terms of biological role, depolymerization of lignin. Catalyzes the C(alpha)-C(beta) cleavage of the propyl side chains of lignin. This is Ligninase H2 (GLG4) from Phanerodontia chrysosporium (White-rot fungus).